A 299-amino-acid chain; its full sequence is 4-hydroxy-tetrahydrodipicolinate synthase (299 aa).

Threonine 44 contributes to the pyruvate binding site. Tyrosine 133 (proton donor/acceptor) is an active-site residue. Residue lysine 162 is the Schiff-base intermediate with substrate of the active site. Isoleucine 204 is a pyruvate binding site.

This sequence belongs to the DapA family. As to quaternary structure, homotetramer; dimer of dimers.

Its subcellular location is the cytoplasm. The catalysed reaction is L-aspartate 4-semialdehyde + pyruvate = (2S,4S)-4-hydroxy-2,3,4,5-tetrahydrodipicolinate + H2O + H(+). The protein operates within amino-acid biosynthesis; L-lysine biosynthesis via DAP pathway; (S)-tetrahydrodipicolinate from L-aspartate: step 3/4. In terms of biological role, catalyzes the condensation of (S)-aspartate-beta-semialdehyde [(S)-ASA] and pyruvate to 4-hydroxy-tetrahydrodipicolinate (HTPA). This Thermus thermophilus (strain ATCC 27634 / DSM 579 / HB8) protein is 4-hydroxy-tetrahydrodipicolinate synthase.